Consider the following 484-residue polypeptide: Cobyric acid synthase (484 aa).

Residues 251 to 438 enclose the GATase cobBQ-type domain; it reads ALKIAVPVLP…LHGLFASDAY (188 aa). Residue cysteine 333 is the Nucleophile of the active site. Histidine 430 is an active-site residue.

This sequence belongs to the CobB/CobQ family. CobQ subfamily.

The protein operates within cofactor biosynthesis; adenosylcobalamin biosynthesis. In terms of biological role, catalyzes amidations at positions B, D, E, and G on adenosylcobyrinic A,C-diamide. NH(2) groups are provided by glutamine, and one molecule of ATP is hydrogenolyzed for each amidation. This chain is Cobyric acid synthase, found in Rhizobium etli (strain CIAT 652).